A 248-amino-acid polypeptide reads, in one-letter code: Probable transcriptional regulatory protein RPD_4171 (248 aa).

The interval 1–22 is disordered; that stretch reads MAGHSQFKNIMHRKGKQDAQRS.

Belongs to the TACO1 family.

It is found in the cytoplasm. This is Probable transcriptional regulatory protein RPD_4171 from Rhodopseudomonas palustris (strain BisB5).